A 401-amino-acid chain; its full sequence is Type I restriction enzyme EcoprrI specificity subunit (401 aa).

Belongs to the type-I restriction system S methylase family. In terms of assembly, the type I restriction/modification system is composed of three polypeptides R, M and S; the restriction enzyme has stoichiometry R(2)M(2)S(1) while the methyltransferase is M(2)S(1).

Its function is as follows. The specificity (S) subunit of a type I restriction enzyme; this subunit dictates DNA sequence specificity. The M and S subunits together form a methyltransferase (MTase) that methylates two adenine residues of the sequence 5'-CCAN(7)ATGC-3'. In the presence of the R subunit the complex can also act as an endonuclease, binding to the same target sequence but cutting the DNA some distance from this site. Whether the DNA is cut or modified depends on the methylation state of the target sequence. When the target site is unmodified, the DNA is cut. When the target site is hemimethylated, the complex acts as a maintenance MTase modifying the DNA so that both strands become methylated. After locating a non-methylated recognition site, the enzyme complex serves as a molecular motor that translocates DNA in an ATP-dependent manner until a collision occurs that triggers cleavage. This chain is Type I restriction enzyme EcoprrI specificity subunit (prrB), found in Escherichia coli.